A 271-amino-acid chain; its full sequence is Ribosomal RNA small subunit methyltransferase A (271 aa).

Asn-19, Leu-21, Gly-46, Glu-67, Asp-92, and Asn-114 together coordinate S-adenosyl-L-methionine.

The protein belongs to the class I-like SAM-binding methyltransferase superfamily. rRNA adenine N(6)-methyltransferase family. RsmA subfamily.

It is found in the cytoplasm. It catalyses the reaction adenosine(1518)/adenosine(1519) in 16S rRNA + 4 S-adenosyl-L-methionine = N(6)-dimethyladenosine(1518)/N(6)-dimethyladenosine(1519) in 16S rRNA + 4 S-adenosyl-L-homocysteine + 4 H(+). In terms of biological role, specifically dimethylates two adjacent adenosines (A1518 and A1519) in the loop of a conserved hairpin near the 3'-end of 16S rRNA in the 30S particle. May play a critical role in biogenesis of 30S subunits. The chain is Ribosomal RNA small subunit methyltransferase A from Aeromonas hydrophila subsp. hydrophila (strain ATCC 7966 / DSM 30187 / BCRC 13018 / CCUG 14551 / JCM 1027 / KCTC 2358 / NCIMB 9240 / NCTC 8049).